Consider the following 199-residue polypeptide: uncharacterized protein (199 aa).

The tract at residues 1–41 is disordered; the sequence is MKFKRDENQNSTHHRGNKNNTNNDDDDKEEEEEIINDTTMP. A compositionally biased stretch (acidic residues) spans 23 to 35; the sequence is NDDDDKEEEEEII. The next 3 helical transmembrane spans lie at 73-93, 96-116, and 166-186; these read LILDLVGFFTQIIPIFGFAFW, ISTYLIFKVYGSGLHLCVSFL, and IAIAVALIAIYKIISYFSPYL.

Its subcellular location is the membrane. This is an uncharacterized protein from Dictyostelium discoideum (Social amoeba).